We begin with the raw amino-acid sequence, 495 residues long: 3-octaprenyl-4-hydroxybenzoate carboxy-lyase (495 aa).

A Mn(2+)-binding site is contributed by N172. Prenylated FMN-binding positions include 175–177, 189–191, and 194–195; these read IYR, RWL, and RG. Residue E238 coordinates Mn(2+). D287 functions as the Proton donor in the catalytic mechanism.

Belongs to the UbiD family. As to quaternary structure, homohexamer. Prenylated FMN is required as a cofactor. The cofactor is Mn(2+).

It is found in the cell membrane. The catalysed reaction is a 4-hydroxy-3-(all-trans-polyprenyl)benzoate + H(+) = a 2-(all-trans-polyprenyl)phenol + CO2. Its pathway is cofactor biosynthesis; ubiquinone biosynthesis. In terms of biological role, catalyzes the decarboxylation of 3-octaprenyl-4-hydroxy benzoate to 2-octaprenylphenol, an intermediate step in ubiquinone biosynthesis. The chain is 3-octaprenyl-4-hydroxybenzoate carboxy-lyase from Yersinia enterocolitica serotype O:8 / biotype 1B (strain NCTC 13174 / 8081).